The following is a 370-amino-acid chain: Aminomethyltransferase (370 aa).

It belongs to the GcvT family. The glycine cleavage system is composed of four proteins: P, T, L and H.

It carries out the reaction N(6)-[(R)-S(8)-aminomethyldihydrolipoyl]-L-lysyl-[protein] + (6S)-5,6,7,8-tetrahydrofolate = N(6)-[(R)-dihydrolipoyl]-L-lysyl-[protein] + (6R)-5,10-methylene-5,6,7,8-tetrahydrofolate + NH4(+). In terms of biological role, the glycine cleavage system catalyzes the degradation of glycine. The polypeptide is Aminomethyltransferase (Clostridium botulinum (strain Okra / Type B1)).